The following is a 235-amino-acid chain: Orotidine 5'-phosphate decarboxylase (235 aa).

Substrate is bound by residues Asp12, Lys34, 61–70 (DLKFHDIPNT), Thr121, Arg182, Gln191, Gly211, and Arg212. The active-site Proton donor is Lys63.

The protein belongs to the OMP decarboxylase family. Type 1 subfamily. As to quaternary structure, homodimer.

It carries out the reaction orotidine 5'-phosphate + H(+) = UMP + CO2. Its pathway is pyrimidine metabolism; UMP biosynthesis via de novo pathway; UMP from orotate: step 2/2. Functionally, catalyzes the decarboxylation of orotidine 5'-monophosphate (OMP) to uridine 5'-monophosphate (UMP). This is Orotidine 5'-phosphate decarboxylase from Marinomonas sp. (strain MWYL1).